A 541-amino-acid chain; its full sequence is Methyl-accepting chemotaxis protein PcaY (541 aa).

Residues 1-10 (MLANLKIRTG) are Cytoplasmic-facing. Residues 11-31 (MFWVLSLFSLTLLFSTASAWW) form a helical membrane-spanning segment. Residues 32 to 189 (AAVGSDQQIT…ESDRRLARAQ (158 aa)) are Periplasmic-facing. A ligand-binding domain region spans residues 35-187 (GSDQQITELD…MLESDRRLAR (153 aa)). Residues 190–210 (LLSLCLLGMTVVLAVLCWAFI) traverse the membrane as a helical segment. At 211–541 (AQRVLHPLRE…MTALVGRFKV (331 aa)) the chain is on the cytoplasmic side. The HAMP domain maps to 212–264 (QRVLHPLREAGGHFRRIASGDLSVPVQGQGNNEIGQLFHELQRMQQSQRDTLG). A Methyl-accepting transducer domain is found at 269–505 (CARQLDAAAS…EVDRNLLNIR (237 aa)). Residues 322–341 (TSQTTSESNQLAAQSRRQVS) form a disordered region.

This sequence belongs to the methyl-accepting chemotaxis (MCP) protein family.

It localises to the cell inner membrane. In terms of biological role, chemotactic-signal transducers respond to changes in the concentration of attractants and repellents in the environment, transduce a signal from the outside to the inside of the cell, and facilitate sensory adaptation through the variation of the level of methylation. PcaY is responsible for the detection of multiple aromatic and hydroaromatic compounds that are metabolized through the beta-ketoadipate catabolic pathway, including vanillin, vanillate, 4-hydroxybenzoate (4-HBA), benzoate and protocatechuate. It also senses several nonmetabolizable aromatic compounds. In Pseudomonas putida (strain ATCC 700007 / DSM 6899 / JCM 31910 / BCRC 17059 / LMG 24140 / F1), this protein is Methyl-accepting chemotaxis protein PcaY.